A 461-amino-acid polypeptide reads, in one-letter code: Asparagine--tRNA ligase (461 aa).

Belongs to the class-II aminoacyl-tRNA synthetase family. As to quaternary structure, homodimer.

The protein localises to the cytoplasm. It carries out the reaction tRNA(Asn) + L-asparagine + ATP = L-asparaginyl-tRNA(Asn) + AMP + diphosphate + H(+). The chain is Asparagine--tRNA ligase from Oleidesulfovibrio alaskensis (strain ATCC BAA-1058 / DSM 17464 / G20) (Desulfovibrio alaskensis).